Consider the following 217-residue polypeptide: Probable transaldolase (217 aa).

K83 (schiff-base intermediate with substrate) is an active-site residue.

The protein belongs to the transaldolase family. Type 3B subfamily.

The protein localises to the cytoplasm. The enzyme catalyses D-sedoheptulose 7-phosphate + D-glyceraldehyde 3-phosphate = D-erythrose 4-phosphate + beta-D-fructose 6-phosphate. The protein operates within carbohydrate degradation; pentose phosphate pathway; D-glyceraldehyde 3-phosphate and beta-D-fructose 6-phosphate from D-ribose 5-phosphate and D-xylulose 5-phosphate (non-oxidative stage): step 2/3. Functionally, transaldolase is important for the balance of metabolites in the pentose-phosphate pathway. This Anaeromyxobacter dehalogenans (strain 2CP-C) protein is Probable transaldolase.